Consider the following 814-residue polypeptide: Threonine--tRNA ligase 2, cytoplasmic (814 aa).

Positions 2-72 form a coiled coil; the sequence is AAHIAQRLTV…SLREEQERAR (71 aa). The tract at residues 62–142 is disordered; that stretch reads RSLREEQERA…GHKQEGPCAP (81 aa). 3 stretches are compositionally biased toward basic and acidic residues: residues 63 to 72, 88 to 102, and 119 to 137; these read SLREEQERAR, EEPKQQNNKAKEKGQ, and GNKKNEKKAGKEVDGHKQE. The TGS domain maps to 172 to 234; sequence KPIKITLADG…EQDSNVELLK (63 aa). The Nuclear localization signal motif lies at 798-804; that stretch reads KLKTLKK.

It belongs to the class-II aminoacyl-tRNA synthetase family.

It localises to the cytoplasm. The protein localises to the nucleus. It catalyses the reaction tRNA(Thr) + L-threonine + ATP = L-threonyl-tRNA(Thr) + AMP + diphosphate + H(+). In terms of biological role, catalyzes the attachment of threonine to tRNA(Thr) in a two-step reaction: threonine is first activated by ATP to form Thr-AMP and then transferred to the acceptor end of tRNA(Thr). Also edits incorrectly charged tRNA(Thr) via its editing domain, at the post-transfer stage. The protein is Threonine--tRNA ligase 2, cytoplasmic (tars3) of Xenopus tropicalis (Western clawed frog).